Reading from the N-terminus, the 64-residue chain is Large ribosomal subunit protein uL29 (64 aa).

Belongs to the universal ribosomal protein uL29 family.

In Teredinibacter turnerae (strain ATCC 39867 / T7901), this protein is Large ribosomal subunit protein uL29.